A 699-amino-acid chain; its full sequence is Fervidolysin (699 aa).

The first 21 residues, 1–21 (MRKVLLIASIVALILALFSCA), serve as a signal peptide directing secretion. Positions 22 to 149 (NPSFEPRSKA…MYKIRKPGLN (128 aa)) are excised as a propeptide. Glu157 contacts Ca(2+). A Peptidase S8 domain is found at 163-465 (LWGLEAIGVT…YGLVKLDAAL (303 aa)). The Charge relay system role is filled by Asp190. Asp199 contacts Ca(2+). His228 serves as the catalytic Charge relay system. Ca(2+) is bound by residues Lys239, Asp241, Lys243, and Ile245. The active-site Charge relay system is Ser409.

It belongs to the peptidase S8 family. In terms of processing, undergoes auto-proteolytic processing. Once cleaved, the propeptide can remain associated with the protease and blocks its activity. The physiological activation of fervidolysin is proposed to be achieved through the stepwise removal of the propeptide accomplished by several proteolytic cleavages that may not be autolytic.

The protein resides in the cell surface. Its activity is regulated as follows. Is inhibited by phenylmethylsulfonyl fluoride and 3,4-dichloroisocoumarin. EDTA and iodoacetate (1 to 5 mM) have only little effect on the enzyme activity. In terms of biological role, protease able to degrade keratin into peptides. Is responsible for keratinolysis by F.pennivorans, which allows this bacterium to grow on native feathers. In Fervidobacterium pennivorans, this protein is Fervidolysin.